Here is a 955-residue protein sequence, read N- to C-terminus: Thyroid hormone receptor-associated protein 3 (955 aa).

The segment at 1–94 (MSKTNKSKSG…YFRGRNRGFY (94 aa)) is disordered. Ser-2 is subject to N-acetylserine. A required for mRNA splicing activation region spans residues 2-190 (SKTNKSKSGS…KSSSKDSRPS (189 aa)). Over residues 14–51 (SRSRSASRSRSRSFSKSRSRSRSLSRSRKRRLSSRSRS) the composition is skewed to basic residues. Arg-17 is subject to Dimethylated arginine. Positions 58-75 (HNRERNHPRVYQNRDFRG) are enriched in basic and acidic residues. Arg-66 carries the asymmetric dimethylarginine modification. Positions 82–94 (RPYYFRGRNRGFY) are enriched in low complexity. Arg-101 and Arg-108 each carry asymmetric dimethylarginine. The segment at 117-559 (AYSPRRGRSR…AKGDFPTGKS (443 aa)) is disordered. Residues 121-143 (RRGRSRSRSPKRRSPSPRSRSHS) are compositionally biased toward basic residues. The segment covering 144–155 (RNSDKSSSDRSR) has biased composition (basic and acidic residues). Over residues 157-166 (SSSSRSSSNH) the composition is skewed to low complexity. The span at 167–188 (SRVESSKRKSAKEKKSSSKDSR) shows a compositional bias: basic and acidic residues. Lys-202 is covalently cross-linked (Glycyl lysine isopeptide (Lys-Gly) (interchain with G-Cter in SUMO1); alternate). Lys-202 participates in a covalent cross-link: Glycyl lysine isopeptide (Lys-Gly) (interchain with G-Cter in SUMO2); alternate. Positions 204 to 220 (QTFSGGTSQDTKASESS) are enriched in polar residues. Lys-215 participates in a covalent cross-link: Glycyl lysine isopeptide (Lys-Gly) (interchain with G-Cter in SUMO2). Residue Ser-220 is modified to Phosphoserine. Residue Lys-221 forms a Glycyl lysine isopeptide (Lys-Gly) (interchain with G-Cter in SUMO2); alternate linkage. Lys-221 carries the N6-acetyllysine; alternate modification. Phosphoserine occurs at positions 232, 237, 240, 243, and 248. Lys-252 is covalently cross-linked (Glycyl lysine isopeptide (Lys-Gly) (interchain with G-Cter in SUMO2); alternate). Lys-252 carries the post-translational modification N6-methyllysine; alternate. Ser-253 and Ser-257 each carry phosphoserine. Positions 266 to 276 (RPSPVPKPSPP) are enriched in pro residues. The span at 282–300 (QMGSTLPSGAGYQSGTHQG) shows a compositional bias: polar residues. Residues 305–331 (GSGSLSPSKKSPVGKSPPSTGSTYGSS) are compositionally biased toward low complexity. A phosphoserine mark is found at Ser-315, Ser-320, and Ser-323. Phosphothreonine is present on Thr-324. Position 326 is a phosphoserine (Ser-326). Phosphotyrosine is present on Tyr-328. Residue Lys-333 forms a Glycyl lysine isopeptide (Lys-Gly) (interchain with G-Cter in SUMO2) linkage. Ser-339 carries the phosphoserine modification. Lys-346 participates in a covalent cross-link: Glycyl lysine isopeptide (Lys-Gly) (interchain with G-Cter in SUMO2); alternate. Lys-346 carries the post-translational modification N6-acetyllysine; alternate. The segment covering 347–377 (RYLEEQKTENGKDKEQKQTNTDKEKIKEKGS) has biased composition (basic and acidic residues). Residues Lys-353 and Lys-375 each participate in a glycyl lysine isopeptide (Lys-Gly) (interchain with G-Cter in SUMO2) cross-link. The segment at 359-955 (DKEQKQTNTD…EKDNIQPTTE (597 aa)) is required for mRNA decay activity. A phosphoserine mark is found at Ser-377 and Ser-379. A Glycyl lysine isopeptide (Lys-Gly) (interchain with G-Cter in SUMO1); alternate cross-link involves residue Lys-387. Lys-387 is covalently cross-linked (Glycyl lysine isopeptide (Lys-Gly) (interchain with G-Cter in SUMO2); alternate). Residues Lys-389 and Lys-396 each participate in a glycyl lysine isopeptide (Lys-Gly) (interchain with G-Cter in SUMO2) cross-link. The residue at position 397 (Thr-397) is a Phosphothreonine. A Glycyl lysine isopeptide (Lys-Gly) (interchain with G-Cter in SUMO2) cross-link involves residue Lys-401. 2 positions are modified to phosphoserine: Ser-406 and Ser-408. The segment covering 414 to 452 (LRDDFEKKMADFHKEEMDDQDKDKAKGRKESEFDDEPKF) has biased composition (basic and acidic residues). Residues Lys-421 and Lys-427 each participate in a glycyl lysine isopeptide (Lys-Gly) (interchain with G-Cter in SUMO2) cross-link. The residue at position 444 (Ser-444) is a Phosphoserine. Residue Lys-451 forms a Glycyl lysine isopeptide (Lys-Gly) (interchain with G-Cter in SUMO1); alternate linkage. Glycyl lysine isopeptide (Lys-Gly) (interchain with G-Cter in SUMO2); alternate cross-links involve residues Lys-451 and Lys-455. Lys-455 is subject to N6-acetyllysine; alternate. Glycyl lysine isopeptide (Lys-Gly) (interchain with G-Cter in SUMO2) cross-links involve residues Lys-461 and Lys-467. Ser-468 is modified (phosphoserine). Glycyl lysine isopeptide (Lys-Gly) (interchain with G-Cter in SUMO2); alternate cross-links involve residues Lys-470 and Lys-481. 2 positions are modified to N6-acetyllysine; alternate: Lys-470 and Lys-481. Lys-486 is covalently cross-linked (Glycyl lysine isopeptide (Lys-Gly) (interchain with G-Cter in SUMO2)). Residues 495–521 (FPERSKKEDRGKRSEGGHRGFVPEKNF) show a composition bias toward basic and acidic residues. Residue Lys-519 is modified to N6-acetyllysine. Residue Lys-527 forms a Glycyl lysine isopeptide (Lys-Gly) (interchain with G-Cter in SUMO2); alternate linkage. Position 527 is an N6-acetyllysine; alternate (Lys-527). Ser-535 bears the Phosphoserine mark. Basic and acidic residues predominate over residues 540–550 (KTSESRDKLGA). A Glycyl lysine isopeptide (Lys-Gly) (interchain with G-Cter in SUMO2) cross-link involves residue Lys-551. 552–559 (GDFPTGKS) contributes to the ATP binding site. A Glycyl lysine isopeptide (Lys-Gly) (interchain with G-Cter in SUMO2); alternate cross-link involves residue Lys-558. Lys-558 is subject to N6-acetyllysine; alternate. A phosphoserine mark is found at Ser-560, Ser-562, and Ser-575. Lys-602 is covalently cross-linked (Glycyl lysine isopeptide (Lys-Gly) (interchain with G-Cter in SUMO2)). 5 positions are modified to phosphoserine: Ser-619, Ser-622, Ser-672, Ser-682, and Ser-684. The span at 663–680 (EQEAAKNKKSPEIHRRID) shows a compositional bias: basic and acidic residues. The segment at 663–955 (EQEAAKNKKS…EKDNIQPTTE (293 aa)) is disordered. Positions 691–761 (LAHDEMKSPR…RSAEKTEKTH (71 aa)) are enriched in basic and acidic residues. A Glycyl lysine isopeptide (Lys-Gly) (interchain with G-Cter in SUMO2) cross-link involves residue Lys-697. Residue Ser-698 is modified to Phosphoserine. Glycyl lysine isopeptide (Lys-Gly) (interchain with G-Cter in SUMO2) cross-links involve residues Lys-705, Lys-709, Lys-711, Lys-756, and Lys-759. A compositionally biased stretch (basic residues) spans 762 to 775 (KGSKKQKKHRRARD). Residues 779–789 (SSSSSSQSSHS) are compositionally biased toward low complexity. Lys-811 carries the post-translational modification N6-acetyllysine. Arg-845 carries the asymmetric dimethylarginine modification. Residues 848 to 859 (YSGNNNNNSNND) are compositionally biased toward low complexity. Thr-874 is subject to Phosphothreonine. Glycyl lysine isopeptide (Lys-Gly) (interchain with G-Cter in SUMO2) cross-links involve residues Lys-876 and Lys-879. A compositionally biased stretch (basic and acidic residues) spans 881 to 895 (YLHDDREGEGSDKWV). Residues Ser-928 and Ser-939 each carry the phosphoserine modification. Positions 930-940 (EEGEIEDDESG) are enriched in acidic residues.

This sequence belongs to the BCLAF1/THRAP3 family. Associated with the large multiprotein complex TRAP (Mediator complex-like). Interacts with SFPQ; the interaction is dependent on SFPQ phosphorylation at 'Thr-687' and inhibits binding of SFPQ to an ESS1 exonic splicing silencer element-containing RNA. Interacts with NXF1. Component of the SNARP complex which consists at least of SNIP1, SNW1, THRAP3, BCLAF1 and PNN. Associated with spliced mRNP complexes. Interacts with HELZ2 and PPARG. Interacts with CLOCK and BMAL1. Component of a MACOM-like complex, named WTAP complex, composed of WTAP, ZC3H13, CBLL1, KIAA1429, RBM15, BCLAF1 and THRAP3. Post-translationally, ADP-ribosylation during genotoxic stress promotes accumulation in nuclear speckles. Ubiquitous.

The protein localises to the nucleus. It is found in the nucleoplasm. Its subcellular location is the nucleus speckle. In terms of biological role, involved in pre-mRNA splicing. Remains associated with spliced mRNA after splicing which probably involves interactions with the exon junction complex (EJC). Can trigger mRNA decay which seems to be independent of nonsense-mediated decay involving premature stop codons (PTC) recognition. May be involved in nuclear mRNA decay. Involved in regulation of signal-induced alternative splicing. During splicing of PTPRC/CD45 is proposed to sequester phosphorylated SFPQ from PTPRC/CD45 pre-mRNA in resting T-cells. Involved in cyclin-D1/CCND1 mRNA stability probably by acting as component of the SNARP complex which associates with both the 3'end of the CCND1 gene and its mRNA. Involved in response to DNA damage. Is excluced from DNA damage sites in a manner that parallels transcription inhibition; the function may involve the SNARP complex. Initially thought to play a role in transcriptional coactivation through its association with the TRAP complex; however, it is not regarded as a stable Mediator complex subunit. Cooperatively with HELZ2, enhances the transcriptional activation mediated by PPARG, maybe through the stabilization of the PPARG binding to DNA in presence of ligand. May play a role in the terminal stage of adipocyte differentiation. Plays a role in the positive regulation of the circadian clock. Acts as a coactivator of the CLOCK-BMAL1 heterodimer and promotes its transcriptional activator activity and binding to circadian target genes. The chain is Thyroid hormone receptor-associated protein 3 from Homo sapiens (Human).